The sequence spans 356 residues: DNA polymerase IV (356 aa).

The UmuC domain occupies 7–188; it reads IIHIDMDCFY…LPLKKIPRVG (182 aa). Mg(2+) is bound by residues aspartate 11 and aspartate 106. The active site involves glutamate 107.

Belongs to the DNA polymerase type-Y family. As to quaternary structure, monomer. Requires Mg(2+) as cofactor.

The protein resides in the cytoplasm. It carries out the reaction DNA(n) + a 2'-deoxyribonucleoside 5'-triphosphate = DNA(n+1) + diphosphate. Its function is as follows. Poorly processive, error-prone DNA polymerase involved in untargeted mutagenesis. Copies undamaged DNA at stalled replication forks, which arise in vivo from mismatched or misaligned primer ends. These misaligned primers can be extended by PolIV. Exhibits no 3'-5' exonuclease (proofreading) activity. May be involved in translesional synthesis, in conjunction with the beta clamp from PolIII. This Actinobacillus pleuropneumoniae serotype 5b (strain L20) protein is DNA polymerase IV.